Here is a 27-residue protein sequence, read N- to C-terminus: Caerulein precursor fragment R8 (27 aa).

In terms of tissue distribution, expressed by the skin glands.

Its subcellular location is the secreted. Its function is as follows. Antimicrobial peptide. The polypeptide is Caerulein precursor fragment R8 (Xenopus ruwenzoriensis (Uganda clawed frog)).